The sequence spans 139 residues: Large ribosomal subunit protein uL22 (139 aa).

The interval Met1–Arg21 is disordered. Residues Arg9–Arg21 show a composition bias toward basic residues.

Belongs to the universal ribosomal protein uL22 family. In terms of assembly, part of the 50S ribosomal subunit.

This protein binds specifically to 23S rRNA; its binding is stimulated by other ribosomal proteins, e.g. L4, L17, and L20. It is important during the early stages of 50S assembly. It makes multiple contacts with different domains of the 23S rRNA in the assembled 50S subunit and ribosome. Functionally, the globular domain of the protein is located near the polypeptide exit tunnel on the outside of the subunit, while an extended beta-hairpin is found that lines the wall of the exit tunnel in the center of the 70S ribosome. This Deinococcus geothermalis (strain DSM 11300 / CIP 105573 / AG-3a) protein is Large ribosomal subunit protein uL22.